We begin with the raw amino-acid sequence, 314 residues long: tRNA uridine(34) hydroxylase (314 aa).

The Rhodanese domain maps to S140 to S234. The active-site Cysteine persulfide intermediate is the C194.

The protein belongs to the TrhO family.

It catalyses the reaction uridine(34) in tRNA + AH2 + O2 = 5-hydroxyuridine(34) in tRNA + A + H2O. Functionally, catalyzes oxygen-dependent 5-hydroxyuridine (ho5U) modification at position 34 in tRNAs. This is tRNA uridine(34) hydroxylase from Acinetobacter baylyi (strain ATCC 33305 / BD413 / ADP1).